The sequence spans 551 residues: Arylsulfatase (551 aa).

The first 20 residues, 1-20, serve as a signal peptide directing secretion; that stretch reads MKSAPFLFLLGLLGLVTAQT. Gln-21 carries the blocked amino end (Gln) modification. 3 residues coordinate Ca(2+): Asp-60, His-61, and Cys-100. Cys-100 functions as the Nucleophile in the catalytic mechanism. A 3-oxoalanine (Cys) modification is found at Cys-100. His-158 is an active-site residue. N-linked (GlcNAc...) asparagine glycosylation is found at Asn-164, Asn-213, and Asn-296. Residues Asp-308 and His-309 each contribute to the Ca(2+) site.

This sequence belongs to the sulfatase family. Requires Ca(2+) as cofactor. Post-translationally, the conversion to 3-oxoalanine (also known as C-formylglycine, FGly), of a serine or cysteine residue in prokaryotes and of a cysteine residue in eukaryotes, is critical for catalytic activity.

It localises to the cytoplasm. The protein localises to the secreted. It is found in the extracellular space. Its subcellular location is the extracellular matrix. It catalyses the reaction an aryl sulfate + H2O = a phenol + sulfate + H(+). May be a structural component of the extracellular matrices involved in cell movement during morphogenesis. The polypeptide is Arylsulfatase (Hemicentrotus pulcherrimus (Sea urchin)).